The primary structure comprises 369 residues: Short chain dehydrogenase rstn4 (369 aa).

5 residues coordinate NADP(+): K88, D111, N138, Y234, and K238. The active-site Proton donor is the Y234. The active-site Lowers pKa of active site Tyr is the K238.

It belongs to the short-chain dehydrogenases/reductases (SDR) family.

The protein operates within antifungal biosynthesis. Its function is as follows. Short chain dehydrogenase; part of the gene cluster that mediates the biosynthesis of the tetrahydropyranyl antifungal agent restricticin that acts as an inhibitor of CYP51 and blocks the ergosterol biosynthesis. The highly reducing polyketide synthase rstn3, the short chain dehydrogenase rstn4, the cyclase rstn5, the FAD-dependent monooxygenase rstn6 and the enoylreductase rstn7 are required to generate the first stable intermediate desmethylrestrictinol. Rstn3 with rstn7 biosynthesize the first polyketide chain intermediate that is reduced by rstn4, followed by epoxidation by rstn6 before 6-endo cyclization via epoxide opening by rstn5 leads to desmethylrestrictinol. The methyltransferase rstn1 then catalyzes the C4 O-methylation of desmethylrestrictinol to produce restrictinol, and the nonribosomal peptide synthetase rstn8 catalyzes the C3 esterification of restrictinol with glycine that leads to restricticin. In Aspergillus nomiae NRRL (strain ATCC 15546 / NRRL 13137 / CBS 260.88 / M93), this protein is Short chain dehydrogenase rstn4.